Reading from the N-terminus, the 248-residue chain is Coenzyme F420:L-glutamate ligase (248 aa).

GTP is bound by residues 15-18 (IPLI), 45-46 (ET), and lysine 50. Aspartate 115 is a binding site for a divalent metal cation. Asparagine 118 contributes to the GTP binding site. Positions 155, 156, and 213 each coordinate a divalent metal cation. Residue 211–218 (MGQSNEGI) participates in GTP binding.

This sequence belongs to the CofE family. Homodimer. The cofactor is Mg(2+). It depends on Mn(2+) as a cofactor. Requires K(+) as cofactor.

The catalysed reaction is oxidized coenzyme F420-0 + GTP + L-glutamate = oxidized coenzyme F420-1 + GDP + phosphate + H(+). It catalyses the reaction oxidized coenzyme F420-1 + GTP + L-glutamate = oxidized coenzyme F420-2 + GDP + phosphate + H(+). The protein operates within cofactor biosynthesis; coenzyme F420 biosynthesis. In terms of biological role, catalyzes the GTP-dependent successive addition of two or more gamma-linked L-glutamates to the L-lactyl phosphodiester of 7,8-didemethyl-8-hydroxy-5-deazariboflavin (F420-0) to form coenzyme F420-0-glutamyl-glutamate (F420-2) or polyglutamated F420 derivatives. This chain is Coenzyme F420:L-glutamate ligase, found in Methanococcus maripaludis (strain DSM 14266 / JCM 13030 / NBRC 101832 / S2 / LL).